A 195-amino-acid chain; its full sequence is HTH-type transcriptional regulator BetI (195 aa).

The HTH tetR-type domain occupies 8-68 (EIRRAQLIDA…ATMRHVLRDL (61 aa)). Residues 31–50 (TLASVAQRASISTGIVSHYF) constitute a DNA-binding region (H-T-H motif).

The protein operates within amine and polyamine biosynthesis; betaine biosynthesis via choline pathway [regulation]. Its function is as follows. Repressor involved in the biosynthesis of the osmoprotectant glycine betaine. It represses transcription of the choline transporter BetT and the genes of BetAB involved in the synthesis of glycine betaine. The chain is HTH-type transcriptional regulator BetI from Paraburkholderia phytofirmans (strain DSM 17436 / LMG 22146 / PsJN) (Burkholderia phytofirmans).